The primary structure comprises 223 residues: MVKFAVVVFPGTNCDFETVEAIKRAGGKAERVWYKDSIKDYDGVVIPGGFSYADYLRAGAIAARQRIMEEIRELAEEGRPILGICNGFQILTEAGLLPGALRPNKIPRFLCKWVHLKVVDVRTPFTYLYEEGEVVRMPIAHAEGNYYIDDPSKVRIVFQYSDEKGSITEEANPNGSVLNIAGVANMEGNILGMMPHPERASHYFLGSEDGLKVFKGMVEWVRS.

The Glutamine amidotransferase type-1 domain maps to 4-223; it reads FAVVVFPGTN…FKGMVEWVRS (220 aa). Cys85 acts as the Nucleophile in catalysis. Residues His196 and Glu198 contribute to the active site.

As to quaternary structure, part of the FGAM synthase complex composed of 1 PurL, 1 PurQ and 2 PurS subunits.

The protein resides in the cytoplasm. The catalysed reaction is N(2)-formyl-N(1)-(5-phospho-beta-D-ribosyl)glycinamide + L-glutamine + ATP + H2O = 2-formamido-N(1)-(5-O-phospho-beta-D-ribosyl)acetamidine + L-glutamate + ADP + phosphate + H(+). It carries out the reaction L-glutamine + H2O = L-glutamate + NH4(+). It functions in the pathway purine metabolism; IMP biosynthesis via de novo pathway; 5-amino-1-(5-phospho-D-ribosyl)imidazole from N(2)-formyl-N(1)-(5-phospho-D-ribosyl)glycinamide: step 1/2. Its function is as follows. Part of the phosphoribosylformylglycinamidine synthase complex involved in the purines biosynthetic pathway. Catalyzes the ATP-dependent conversion of formylglycinamide ribonucleotide (FGAR) and glutamine to yield formylglycinamidine ribonucleotide (FGAM) and glutamate. The FGAM synthase complex is composed of three subunits. PurQ produces an ammonia molecule by converting glutamine to glutamate. PurL transfers the ammonia molecule to FGAR to form FGAM in an ATP-dependent manner. PurS interacts with PurQ and PurL and is thought to assist in the transfer of the ammonia molecule from PurQ to PurL. The sequence is that of Phosphoribosylformylglycinamidine synthase subunit PurQ from Pyrococcus furiosus (strain ATCC 43587 / DSM 3638 / JCM 8422 / Vc1).